Here is a 302-residue protein sequence, read N- to C-terminus: Tyrosine recombinase XerC (302 aa).

Residues 6 to 90 (DLEVTCLQDY…AIKQWGEFLL (85 aa)) form the Core-binding (CB) domain. The Tyr recombinase domain occupies 111-290 (PLPKNMDVDS…DFQHLAKVYD (180 aa)). Catalysis depends on residues R150, K174, H242, R245, and H268. Residue Y277 is the O-(3'-phospho-DNA)-tyrosine intermediate of the active site.

This sequence belongs to the 'phage' integrase family. XerC subfamily. As to quaternary structure, forms a cyclic heterotetrameric complex composed of two molecules of XerC and two molecules of XerD.

The protein resides in the cytoplasm. In terms of biological role, site-specific tyrosine recombinase, which acts by catalyzing the cutting and rejoining of the recombining DNA molecules. The XerC-XerD complex is essential to convert dimers of the bacterial chromosome into monomers to permit their segregation at cell division. It also contributes to the segregational stability of plasmids. The sequence is that of Tyrosine recombinase XerC from Shewanella putrefaciens (strain CN-32 / ATCC BAA-453).